Consider the following 399-residue polypeptide: Endonuclease III homolog 1 (399 aa).

The transit peptide at 1–26 (MQKISKYSSMAILRKRPLVKTETGPE) directs the protein to the mitochondrion. The Bipartite nuclear localization signal motif lies at 14–37 (RKRPLVKTETGPESELLPEKRTKI). A Glycyl lysine isopeptide (Lys-Gly) (interchain with G-Cter in SUMO) cross-link involves residue K194. Residues 223–247 (FSSDVPATINELLGLPGVGPKMAYL) form the HhH domain. K243 (nucleophile; for N-glycosylase activity) is an active-site residue.

Belongs to the Nth/MutY family. Post-translationally, monosumoylated. Sumoylation is associated with targeting of NTG1 to nuclei containing oxidative DNA damage.

It localises to the nucleus. The protein resides in the mitochondrion. It catalyses the reaction 2'-deoxyribonucleotide-(2'-deoxyribose 5'-phosphate)-2'-deoxyribonucleotide-DNA = a 3'-end 2'-deoxyribonucleotide-(2,3-dehydro-2,3-deoxyribose 5'-phosphate)-DNA + a 5'-end 5'-phospho-2'-deoxyribonucleoside-DNA + H(+). Functionally, bifunctional DNA N-glycosylase with associated apurinic/apyrimidinic (AP) lyase function that catalyzes the first step in base excision repair (BER), the primary repair pathway for the repair of oxidative DNA damage. The DNA N-glycosylase activity releases the damaged DNA base from DNA by cleaving the N-glycosidic bond, leaving an AP site. The AP-lyase activity cleaves the phosphodiester bond 3' to the AP site by a beta-elimination. Primarily recognizes and repairs oxidative base damage of pyrimidines, but also purine-derived lesions, alkylation damage and cytosine photoproducts generated by UV irradiation as well as abasic sites. Also has 8-oxoguanine DNA glycosylase activity. The AP lyase can incise AP sites opposite all four bases. May also play a role in the regulation of mtDNA copy number by introducing a double-stranded break (DSB) at the mtDNA replication origin ori5, initiating the rolling-circle mtDNA replication. The sequence is that of Endonuclease III homolog 1 from Saccharomyces cerevisiae (strain ATCC 204508 / S288c) (Baker's yeast).